The following is a 236-amino-acid chain: LexA repressor (236 aa).

Residues 1-25 (MNDSNDTSVAGGAAGADSRVLSADS) are disordered. A DNA-binding region (H-T-H motif) is located at residues 51–71 (IREIGDAVGLTSTSSVAHQLR). Catalysis depends on for autocatalytic cleavage activity residues Ser-160 and Lys-197.

The protein belongs to the peptidase S24 family. In terms of assembly, homodimer.

The catalysed reaction is Hydrolysis of Ala-|-Gly bond in repressor LexA.. Represses a number of genes involved in the response to DNA damage (SOS response), including recA and lexA. In the presence of single-stranded DNA, RecA interacts with LexA causing an autocatalytic cleavage which disrupts the DNA-binding part of LexA, leading to derepression of the SOS regulon and eventually DNA repair. The sequence is that of LexA repressor from Mycobacterium tuberculosis (strain ATCC 25177 / H37Ra).